We begin with the raw amino-acid sequence, 153 residues long: Deoxyuridine 5'-triphosphate nucleotidohydrolase (153 aa).

Substrate is bound by residues 71-73, Asn84, 88-90, and Met98; these read RSG and LID.

Belongs to the dUTPase family. Requires Mg(2+) as cofactor.

It carries out the reaction dUTP + H2O = dUMP + diphosphate + H(+). The protein operates within pyrimidine metabolism; dUMP biosynthesis; dUMP from dCTP (dUTP route): step 2/2. This enzyme is involved in nucleotide metabolism: it produces dUMP, the immediate precursor of thymidine nucleotides and it decreases the intracellular concentration of dUTP so that uracil cannot be incorporated into DNA. The protein is Deoxyuridine 5'-triphosphate nucleotidohydrolase of Hydrogenovibrio crunogenus (strain DSM 25203 / XCL-2) (Thiomicrospira crunogena).